We begin with the raw amino-acid sequence, 38 residues long: Photosystem II reaction center protein L (38 aa).

The helical transmembrane segment at serine 17–phenylalanine 37 threads the bilayer.

The protein belongs to the PsbL family. In terms of assembly, PSII is composed of 1 copy each of membrane proteins PsbA, PsbB, PsbC, PsbD, PsbE, PsbF, PsbH, PsbI, PsbJ, PsbK, PsbL, PsbM, PsbT, PsbX, PsbY, PsbZ, Psb30/Ycf12, at least 3 peripheral proteins of the oxygen-evolving complex and a large number of cofactors. It forms dimeric complexes.

It localises to the plastid membrane. In terms of biological role, one of the components of the core complex of photosystem II (PSII). PSII is a light-driven water:plastoquinone oxidoreductase that uses light energy to abstract electrons from H(2)O, generating O(2) and a proton gradient subsequently used for ATP formation. It consists of a core antenna complex that captures photons, and an electron transfer chain that converts photonic excitation into a charge separation. This subunit is found at the monomer-monomer interface and is required for correct PSII assembly and/or dimerization. The chain is Photosystem II reaction center protein L from Aneura mirabilis (Parasitic liverwort).